We begin with the raw amino-acid sequence, 269 residues long: MPELPEVETSRRGIEPHLVGATILHAHIRNGRLRWPVSDEIYRLSDTPVLSVQRRAKYLLLELPDGWIIIHLGMSGSLRILSEALPAEKHDHVDLVMSNGKILRYTDPRRFGAWLWTKELEGHNVLAHLGPEPLSDEFNGEYLQQKCAKKKTAIKPWLMDNKLVVGVGNIYASESLFAAGIHPDRLASSLSTAECDLLAQVIKAVLLRSIEQGGTTLKDFLQSDGKPGYFAQELQVYGRKGEPCRVCGTPIVATKHAQRATFYCRHCQK.

Catalysis depends on Pro-2, which acts as the Schiff-base intermediate with DNA. Glu-3 (proton donor) is an active-site residue. The Proton donor; for beta-elimination activity role is filled by Lys-57. DNA contacts are provided by His-90, Arg-109, and Lys-150. Residues 235-269 (QVYGRKGEPCRVCGTPIVATKHAQRATFYCRHCQK) form an FPG-type zinc finger. Arg-259 acts as the Proton donor; for delta-elimination activity in catalysis.

The protein belongs to the FPG family. Monomer. The cofactor is Zn(2+).

It catalyses the reaction Hydrolysis of DNA containing ring-opened 7-methylguanine residues, releasing 2,6-diamino-4-hydroxy-5-(N-methyl)formamidopyrimidine.. The catalysed reaction is 2'-deoxyribonucleotide-(2'-deoxyribose 5'-phosphate)-2'-deoxyribonucleotide-DNA = a 3'-end 2'-deoxyribonucleotide-(2,3-dehydro-2,3-deoxyribose 5'-phosphate)-DNA + a 5'-end 5'-phospho-2'-deoxyribonucleoside-DNA + H(+). In terms of biological role, involved in base excision repair of DNA damaged by oxidation or by mutagenic agents. Acts as a DNA glycosylase that recognizes and removes damaged bases. Has a preference for oxidized purines, such as 7,8-dihydro-8-oxoguanine (8-oxoG). Has AP (apurinic/apyrimidinic) lyase activity and introduces nicks in the DNA strand. Cleaves the DNA backbone by beta-delta elimination to generate a single-strand break at the site of the removed base with both 3'- and 5'-phosphates. This Salmonella newport (strain SL254) protein is Formamidopyrimidine-DNA glycosylase.